The sequence spans 143 residues: UPF0201 protein PAE1632 (143 aa).

The protein belongs to the UPF0201 family.

The chain is UPF0201 protein PAE1632 from Pyrobaculum aerophilum (strain ATCC 51768 / DSM 7523 / JCM 9630 / CIP 104966 / NBRC 100827 / IM2).